Consider the following 355-residue polypeptide: Proto-oncogene Wnt-3 (355 aa).

The signal sequence occupies residues 1-21 (MEPHLLGLLLGLLLSGTRVLA). Cystine bridges form between Cys80-Cys91, Cys131-Cys139, Cys141-Cys158, Cys206-Cys220, Cys208-Cys215, Cys284-Cys315, Cys300-Cys310, Cys314-Cys354, Cys330-Cys345, Cys332-Cys342, and Cys337-Cys338. Asn90 carries an N-linked (GlcNAc...) asparagine glycan. A lipid anchor (O-palmitoleoyl serine; by PORCN) is attached at Ser212. Asn301 carries an N-linked (GlcNAc...) asparagine glycan.

Belongs to the Wnt family. As to quaternary structure, forms a soluble 1:1 complex with AFM; this prevents oligomerization and is required for prolonged biological activity. The complex with AFM may represent the physiological form in body fluids. Interacts with PORCN. Interacts with WLS. Post-translationally, palmitoleoylation is required for efficient binding to frizzled receptors. Depalmitoleoylation leads to Wnt signaling pathway inhibition. Detected at low levels in adult brain. Dorsal portion of the neural tube, dorsal ectoderm, the branchial arches, and the limb buds.

It localises to the secreted. The protein localises to the extracellular space. It is found in the extracellular matrix. Functionally, ligand for members of the frizzled family of seven transmembrane receptors. Functions in the canonical Wnt signaling pathway that results in activation of transcription factors of the TCF/LEF family. Required for normal gastrulation, formation of the primitive streak, and for the formation of the mesoderm during early embryogenesis. Required for normal formation of the apical ectodermal ridge and for normal embryonic limb development. This is Proto-oncogene Wnt-3 (Wnt3) from Mus musculus (Mouse).